A 278-amino-acid polypeptide reads, in one-letter code: Poly(3-hydroxyoctanoate) depolymerase (278 aa).

An N-terminal signal peptide occupies residues 1 to 33 (MPLRTLLCGLLLAVCLGQHALAASRCSERPRTL).

Its subcellular location is the secreted. The enzyme catalyses Hydrolyzes the polyester poly{oxycarbonyl[(R)-2-pentylethylene]} to oligomers.. In terms of biological role, hydrolysis of poly(3-hydroxyoctanoic acid). The chain is Poly(3-hydroxyoctanoate) depolymerase (phaZ) from Pseudomonas fluorescens.